Consider the following 112-residue polypeptide: Ferredoxin, plant-type (112 aa).

Positions 6–97 (YEVFEVLSGQ…DLTIEYFRHV (92 aa)) constitute a 2Fe-2S ferredoxin-type domain. Residues cysteine 41, cysteine 46, cysteine 49, and cysteine 81 each contribute to the [2Fe-2S] cluster site.

It belongs to the 2Fe2S plant-type ferredoxin family.

It participates in aromatic compound metabolism; catechol degradation. Ferredoxins are iron-sulfur proteins that transfer electrons in a wide variety of metabolic reactions. This chain is Ferredoxin, plant-type (xylT), found in Pseudomonas putida (Arthrobacter siderocapsulatus).